Reading from the N-terminus, the 703-residue chain is Fatty acid oxidation complex subunit alpha (703 aa).

The tract at residues 1-190 is enoyl-CoA hydratase; that stretch reads MSEQKAFSLN…KLGVVDACVP (190 aa). Residues 308 to 703 are 3-hydroxyacyl-CoA dehydrogenase; sequence AAVKKVGVLG…TRAGEGRTFY (396 aa).

This sequence in the N-terminal section; belongs to the enoyl-CoA hydratase/isomerase family. The protein in the central section; belongs to the 3-hydroxyacyl-CoA dehydrogenase family. Heterotetramer of two alpha chains (FadJ) and two beta chains (FadI).

It is found in the cytoplasm. It carries out the reaction a (3S)-3-hydroxyacyl-CoA = a (2E)-enoyl-CoA + H2O. The catalysed reaction is a 4-saturated-(3S)-3-hydroxyacyl-CoA = a (3E)-enoyl-CoA + H2O. The enzyme catalyses a (3S)-3-hydroxyacyl-CoA + NAD(+) = a 3-oxoacyl-CoA + NADH + H(+). It catalyses the reaction (3S)-3-hydroxybutanoyl-CoA = (3R)-3-hydroxybutanoyl-CoA. Its pathway is lipid metabolism; fatty acid beta-oxidation. Its function is as follows. Catalyzes the formation of a hydroxyacyl-CoA by addition of water on enoyl-CoA. Also exhibits 3-hydroxyacyl-CoA epimerase and 3-hydroxyacyl-CoA dehydrogenase activities. The sequence is that of Fatty acid oxidation complex subunit alpha from Vibrio parahaemolyticus serotype O3:K6 (strain RIMD 2210633).